We begin with the raw amino-acid sequence, 373 residues long: XK-related protein 9 (373 aa).

Transmembrane regions (helical) follow at residues 8–28 (FMMSVLGIIIYVTDLIVDIWV), 38–58 (YVFSALALSFMLFGTLVAQCF), 166–186 (AAIMVSCCAISWSTVDYQVAL), 203–223 (ITYLFYKLFTLLSWMLSVVLL), 224–244 (LFLNVKIALFLLLFLWLLGII), 256–276 (CISMEFLYRIVVGFILIFTFF), 295–315 (VLGTLGILTVFWVCPLNIFNP), and 318–338 (FIPISITIVLTLLLGILFLIV).

It belongs to the XK family. In terms of processing, undergoes proteolytic processing by caspase-3 (CASP3), caspase-6 (CASP6) and caspase-7 (CASP7) to generate the XK-related protein 9, processed form, leading to its activation.

It localises to the cell membrane. The catalysed reaction is a 1,2-diacyl-sn-glycero-3-phospho-L-serine(in) = a 1,2-diacyl-sn-glycero-3-phospho-L-serine(out). Activated upon caspase cleavage to generate the XK-related protein 9, processed form. Does not act prior the onset of apoptosis. Functionally, phospholipid scramblase that promotes phosphatidylserine exposure on apoptotic cell surface. Phosphatidylserine is a specific marker only present at the surface of apoptotic cells and acts as a specific signal for engulfment. This chain is XK-related protein 9, found in Pan troglodytes (Chimpanzee).